Reading from the N-terminus, the 418-residue chain is Thyroxine-binding globulin (418 aa).

The N-terminal stretch at 1-20 (MSVFFYLFVLVFGLQATIHC) is a signal peptide. N24, N39, N102, N168, N227, and N256 each carry an N-linked (GlcNAc...) asparagine glycan. Residues N296 and K401 each contribute to the thyroxine site.

It belongs to the serpin family.

Its subcellular location is the secreted. In terms of biological role, major thyroid hormone transport protein in serum. This chain is Thyroxine-binding globulin (Serpina7), found in Mus musculus (Mouse).